A 383-amino-acid chain; its full sequence is Caspase a (383 aa).

Residues 1–142 constitute a propeptide that is removed on maturation; sequence MAKSIKDHLQ…ETYEIKDKSV (142 aa). One can recognise a Pyrin domain in the interval 8–81; that stretch reads HLQDALSNIG…RGIKCNAVAE (74 aa). Residues 87–106 are disordered; it reads TGQGGVSQPEPPVPEPIPKD. Residues H220 and C270 contribute to the active site. A propeptide spanning residues 275–296 is cleaved from the precursor; that stretch reads HGRVWASDGEPDEPIEIEDDDF.

Belongs to the peptidase C14A family. In terms of assembly, heterotetramer that consists of two anti-parallel arranged heterodimers, each one formed by a 20 kDa (p20) and a 10 kDa (p10) subunit. Interacts (via pyrin domain) with pycard (via pyrin domain). Interacts with caspb. Component of NLRP1 inflammasomes. Inflammasomes are supramolecular complexes that assemble in the cytosol in response to pathogens and other damage-associated signals and play critical roles in innate immunity and inflammation. The NLRP1 inflammasome is composed of the signal sensor nlrp1, and the adapter pycard (asc), which recruit effector pro-inflammatory caspases caspa and/or caspb. The interaction between nlrp1 and pycard is required for the sequential recruitment of caspa and then caspb. Caspa is preferentially recruited first and this causes the cleavage of pro-il1b into the midformed il1b. This is followed by the recruitment of caspb, which is activated and cleaves the midformed il1b resulting in il1b maturation. Interacts with caiap. Post-translationally, the two subunits are derived from the precursor sequence by an autocatalytic mechanism.

Its subcellular location is the inflammasome. It localises to the cytoplasm. It carries out the reaction Strict requirement for an Asp residue at position P1 and has a preferred cleavage sequence of Tyr-Val-Ala-Asp-|-.. In terms of biological role, thiol protease which cleaves IL-1 beta (il1b), releasing the mature cytokine which is involved in a variety of inflammatory processes, and mediates apoptosis. Component of the NLRP1 inflammasome, which plays a crucial role in innate immunity and inflammation. In response to pathogens and other damage-associated signals, recruited to the NLRP1 inflammasome in its precursor form. Its subsequent activation causes the cleavage of pro-il1b into the midformed il1b, which then evetually leads to il1b maturation and secretion in the extracellular milieu. Required for the development of the cartilaginous pharyngeal skeleton. This Danio rerio (Zebrafish) protein is Caspase a.